A 378-amino-acid chain; its full sequence is Tetraacyldisaccharide 4'-kinase (378 aa).

An ATP-binding site is contributed by 63-70; it reads AVGGAGKT.

The protein belongs to the LpxK family.

The enzyme catalyses a lipid A disaccharide + ATP = a lipid IVA + ADP + H(+). It functions in the pathway glycolipid biosynthesis; lipid IV(A) biosynthesis; lipid IV(A) from (3R)-3-hydroxytetradecanoyl-[acyl-carrier-protein] and UDP-N-acetyl-alpha-D-glucosamine: step 6/6. Functionally, transfers the gamma-phosphate of ATP to the 4'-position of a tetraacyldisaccharide 1-phosphate intermediate (termed DS-1-P) to form tetraacyldisaccharide 1,4'-bis-phosphate (lipid IVA). The polypeptide is Tetraacyldisaccharide 4'-kinase (Anaeromyxobacter dehalogenans (strain 2CP-C)).